The primary structure comprises 476 residues: Ribulose bisphosphate carboxylase large chain (476 aa).

2 residues coordinate substrate: N124 and T174. The active-site Proton acceptor is K176. K178 is a binding site for substrate. 3 residues coordinate Mg(2+): K202, D204, and E205. Residue K202 is modified to N6-carboxylysine. H295 acts as the Proton acceptor in catalysis. Residues R296, H328, and S380 each contribute to the substrate site.

This sequence belongs to the RuBisCO large chain family. Type I subfamily. Heterohexadecamer of 8 large chains and 8 small chains; disulfide-linked. The disulfide link is formed within the large subunit homodimers. The cofactor is Mg(2+). Post-translationally, the disulfide bond which can form in the large chain dimeric partners within the hexadecamer appears to be associated with oxidative stress and protein turnover.

Its subcellular location is the carboxysome. The catalysed reaction is 2 (2R)-3-phosphoglycerate + 2 H(+) = D-ribulose 1,5-bisphosphate + CO2 + H2O. The enzyme catalyses D-ribulose 1,5-bisphosphate + O2 = 2-phosphoglycolate + (2R)-3-phosphoglycerate + 2 H(+). Its function is as follows. RuBisCO catalyzes two reactions: the carboxylation of D-ribulose 1,5-bisphosphate, the primary event in carbon dioxide fixation, as well as the oxidative fragmentation of the pentose substrate in the photorespiration process. Both reactions occur simultaneously and in competition at the same active site. The chain is Ribulose bisphosphate carboxylase large chain from Nostoc punctiforme (strain ATCC 29133 / PCC 73102).